The sequence spans 84 residues: Exendin-2-long (84 aa).

Positions 1-23 (MKSILWLCVFGLLIATLFPVSWQ) are cleaved as a signal peptide. The propeptide occupies 24 to 44 (MAIKSRLSSEDSETDQRLFES).

This sequence belongs to the glucagon family. Post-translationally, an amidated Pro-81 is described. Such an amidation is however not compatible with the sequence displayed. Indeed cDNAs do not encode a Gly that could serve as substrate for peptide alpha-amidation. Expressed by the venom gland. Not expressed in the pancreas, liver, stomach, small intestine, lung, heart, kidney, spleen, ovary, and brain.

The protein localises to the secreted. In terms of biological role, has vasoactive intestinal peptide(VIP)/secretin-like biological activity. Interacts with rat and human VIP receptors 1 (VIPR1) and 2 (VIPR2), with the highest affinity for the human VIPR2. Induces hypotension that is mediated by relaxation of cardiac smooth muscle. This vasodilation may not be transduced by VIP or PACAP receptors. The sequence is that of Exendin-2-long from Heloderma suspectum (Gila monster).